Consider the following 478-residue polypeptide: V-type proton ATPase subunit H (478 aa).

Belongs to the V-ATPase H subunit family. As to quaternary structure, V-ATPase is a heteromultimeric enzyme composed of a peripheral catalytic V1 complex (components A to H) attached to an integral membrane V0 proton pore complex (components: a, c, c', c'', d, e, f and VOA1). Interacts with YND1.

Its subcellular location is the vacuole membrane. Its function is as follows. Subunit of the V1 complex of vacuolar(H+)-ATPase (V-ATPase), a multisubunit enzyme composed of a peripheral complex (V1) that hydrolyzes ATP and a membrane integral complex (V0) that translocates protons. V-ATPase is responsible for acidifying and maintaining the pH of intracellular compartments. This subunit is essential for activity, but not assembly, of the enzyme complex. This subunit is also required for silencing the ATPase activity of V-ATPase when V1 is detached from V0. The polypeptide is V-type proton ATPase subunit H (Saccharomyces cerevisiae (strain ATCC 204508 / S288c) (Baker's yeast)).